Here is a 196-residue protein sequence, read N- to C-terminus: Probable malonic semialdehyde reductase RutE (196 aa).

The protein belongs to the nitroreductase family. HadB/RutE subfamily. Requires FMN as cofactor.

The enzyme catalyses 3-hydroxypropanoate + NADP(+) = 3-oxopropanoate + NADPH + H(+). In terms of biological role, may reduce toxic product malonic semialdehyde to 3-hydroxypropionic acid, which is excreted. This chain is Probable malonic semialdehyde reductase RutE, found in Shigella flexneri serotype 5b (strain 8401).